The primary structure comprises 145 residues: uncharacterized protein (145 aa).

Its subcellular location is the mitochondrion. This is an uncharacterized protein from Arabidopsis thaliana (Mouse-ear cress).